The chain runs to 55 residues: Potassium channel toxin alpha-KTX 12 Sp2 (55 aa).

The signal sequence occupies residues 1 to 18; it reads MRLAIILLLMTTIVLTIG. Cystine bridges form between Cys26-Cys46, Cys32-Cys51, and Cys36-Cys53.

The protein belongs to the short scorpion toxin superfamily. Potassium channel inhibitor family. Alpha-KTx 12 subfamily. Expressed by the venom gland.

The protein resides in the secreted. Functionally, blocks mouse voltage-gated potassium channels Kv1.3/KCNA3 (IC(50)=0.3-30 nM), when the channel is expressed in Jurkat T cells or in HEK293 cells. Also shows a weaker inhibition on mKv1.2/KCNA2 (IC(50)=56.9 nM) and mKv1.1/KCNA1 (IC(50)=485 nM). Probably through the inhibition of both Kv1.2/KCNA2 and Kv1.3/KCNA3, the toxin also reduces the free calcium concentration in Jurkat T cells, inhibits the activation of Jurkat T cells and reduces the release of inflammatory cytokines interleukin-2, showing a strong immunosuppressant effect. The polypeptide is Potassium channel toxin alpha-KTX 12 Sp2 (Scorpiops pococki (Scorpion)).